The following is a 382-amino-acid chain: 3-dehydroquinate synthase (382 aa).

Residues 81–86 (EGEGSK), 115–119 (GVVGD), 139–140 (TS), Lys-152, and Lys-161 each bind NAD(+). Residues Glu-194, His-256, and His-274 each coordinate Zn(2+).

It belongs to the sugar phosphate cyclases superfamily. Dehydroquinate synthase family. Co(2+) is required as a cofactor. It depends on Zn(2+) as a cofactor. The cofactor is NAD(+).

It localises to the cytoplasm. The enzyme catalyses 7-phospho-2-dehydro-3-deoxy-D-arabino-heptonate = 3-dehydroquinate + phosphate. It functions in the pathway metabolic intermediate biosynthesis; chorismate biosynthesis; chorismate from D-erythrose 4-phosphate and phosphoenolpyruvate: step 2/7. Catalyzes the conversion of 3-deoxy-D-arabino-heptulosonate 7-phosphate (DAHP) to dehydroquinate (DHQ). This Bradyrhizobium sp. (strain BTAi1 / ATCC BAA-1182) protein is 3-dehydroquinate synthase.